Here is a 256-residue protein sequence, read N- to C-terminus: uncharacterized protein (256 aa).

Belongs to the methyltransferase superfamily.

It localises to the cytoplasm. Its subcellular location is the nucleus. Its function is as follows. Probable methyltransferase. This is an uncharacterized protein from Schizosaccharomyces pombe (strain 972 / ATCC 24843) (Fission yeast).